A 430-amino-acid polypeptide reads, in one-letter code: Adenylosuccinate synthetase (430 aa).

GTP contacts are provided by residues Gly12–Lys18 and Gly40–Thr42. The active-site Proton acceptor is Asp13. Residues Asp13 and Gly40 each contribute to the Mg(2+) site. Residues Asp13–Lys16, Asn38–His41, Thr128, Arg142, Gln223, Thr238, and Arg302 each bind IMP. The Proton donor role is filled by His41. GTP contacts are provided by residues Ser330–Asp332 and Ser412–Gly414.

This sequence belongs to the adenylosuccinate synthetase family. Homodimer. Mg(2+) serves as cofactor.

It is found in the cytoplasm. It carries out the reaction IMP + L-aspartate + GTP = N(6)-(1,2-dicarboxyethyl)-AMP + GDP + phosphate + 2 H(+). It functions in the pathway purine metabolism; AMP biosynthesis via de novo pathway; AMP from IMP: step 1/2. Plays an important role in the de novo pathway of purine nucleotide biosynthesis. Catalyzes the first committed step in the biosynthesis of AMP from IMP. The polypeptide is Adenylosuccinate synthetase (Bacillus subtilis (strain 168)).